Consider the following 346-residue polypeptide: Holliday junction branch migration complex subunit RuvB (346 aa).

The tract at residues 1–182 (MTRVISGEPQ…FGIPIRLEFY (182 aa)) is large ATPase domain (RuvB-L). ATP is bound by residues Leu21, Arg22, Gly63, Lys66, Thr67, Thr68, Arg172, Tyr182, and Arg219. Thr67 lines the Mg(2+) pocket. Positions 183 to 253 (TPAELRHVLQ…AAAMALARLE (71 aa)) are small ATPAse domain (RuvB-S). Residues 256-346 (ESGLDSLDRR…QAQGALFDEG (91 aa)) form a head domain (RuvB-H) region. DNA-binding residues include Arg292, Arg311, and Arg316.

It belongs to the RuvB family. As to quaternary structure, homohexamer. Forms an RuvA(8)-RuvB(12)-Holliday junction (HJ) complex. HJ DNA is sandwiched between 2 RuvA tetramers; dsDNA enters through RuvA and exits via RuvB. An RuvB hexamer assembles on each DNA strand where it exits the tetramer. Each RuvB hexamer is contacted by two RuvA subunits (via domain III) on 2 adjacent RuvB subunits; this complex drives branch migration. In the full resolvosome a probable DNA-RuvA(4)-RuvB(12)-RuvC(2) complex forms which resolves the HJ.

It localises to the cytoplasm. It carries out the reaction ATP + H2O = ADP + phosphate + H(+). Functionally, the RuvA-RuvB-RuvC complex processes Holliday junction (HJ) DNA during genetic recombination and DNA repair, while the RuvA-RuvB complex plays an important role in the rescue of blocked DNA replication forks via replication fork reversal (RFR). RuvA specifically binds to HJ cruciform DNA, conferring on it an open structure. The RuvB hexamer acts as an ATP-dependent pump, pulling dsDNA into and through the RuvAB complex. RuvB forms 2 homohexamers on either side of HJ DNA bound by 1 or 2 RuvA tetramers; 4 subunits per hexamer contact DNA at a time. Coordinated motions by a converter formed by DNA-disengaged RuvB subunits stimulates ATP hydrolysis and nucleotide exchange. Immobilization of the converter enables RuvB to convert the ATP-contained energy into a lever motion, pulling 2 nucleotides of DNA out of the RuvA tetramer per ATP hydrolyzed, thus driving DNA branch migration. The RuvB motors rotate together with the DNA substrate, which together with the progressing nucleotide cycle form the mechanistic basis for DNA recombination by continuous HJ branch migration. Branch migration allows RuvC to scan DNA until it finds its consensus sequence, where it cleaves and resolves cruciform DNA. This is Holliday junction branch migration complex subunit RuvB from Caulobacter vibrioides (strain ATCC 19089 / CIP 103742 / CB 15) (Caulobacter crescentus).